Reading from the N-terminus, the 419-residue chain is Pyrophosphate--fructose 6-phosphate 1-phosphotransferase (419 aa).

Gly-13 is a diphosphate binding site. Substrate is bound by residues 142 to 144 (TVD), 190 to 192 (MGR), Glu-247, and 297 to 300 (YLQR). The active-site Proton acceptor is Asp-144.

This sequence belongs to the phosphofructokinase type A (PFKA) family. PPi-dependent PFK group II subfamily. Clade 'B2' sub-subfamily. Homodimer. Mg(2+) serves as cofactor.

Its subcellular location is the cytoplasm. The catalysed reaction is beta-D-fructose 6-phosphate + diphosphate = beta-D-fructose 1,6-bisphosphate + phosphate + H(+). It participates in carbohydrate degradation; glycolysis; D-glyceraldehyde 3-phosphate and glycerone phosphate from D-glucose: step 3/4. Non-allosteric. In terms of biological role, catalyzes the phosphorylation of D-fructose 6-phosphate, the first committing step of glycolysis. Uses inorganic phosphate (PPi) as phosphoryl donor instead of ATP like common ATP-dependent phosphofructokinases (ATP-PFKs), which renders the reaction reversible, and can thus function both in glycolysis and gluconeogenesis. Consistently, PPi-PFK can replace the enzymes of both the forward (ATP-PFK) and reverse (fructose-bisphosphatase (FBPase)) reactions. This Halomonas elongata (strain ATCC 33173 / DSM 2581 / NBRC 15536 / NCIMB 2198 / 1H9) protein is Pyrophosphate--fructose 6-phosphate 1-phosphotransferase.